Consider the following 911-residue polypeptide: Envelope glycoprotein B (911 aa).

The signal sequence occupies residues Met1 to Cys30. Residues Ala31–Pro778 lie on the Virion surface side of the membrane. Cystine bridges form between Cys86/Cys543, Cys103/Cys499, Cys177/Cys239, Cys330/Cys378, and Cys566/Cys635. 2 N-linked (GlcNAc...) asparagine; by host glycosylation sites follow: Asn111 and Asn130. The interval Thr143–Leu149 is involved in fusion and/or binding to host membrane. An N-linked (GlcNAc...) asparagine; by host glycan is attached at Asn221. Residues Ala228–Thr233 form an involved in fusion and/or binding to host membrane region. Residues Asn347, Asn369, Asn384, Asn438, and Asn594 are each glycosylated (N-linked (GlcNAc...) asparagine; by host). The disordered stretch occupies residues Arg591–Gln610. The segment covering Gly599–Gln610 has biased composition (low complexity). Asn662 is a glycosylation site (N-linked (GlcNAc...) asparagine; by host). The tract at residues Leu722 to Ala776 is hydrophobic membrane proximal region. The helical transmembrane segment at Phe779–Phe799 threads the bilayer. The Intravirion segment spans residues Arg800–Leu911.

This sequence belongs to the herpesviridae glycoprotein B family. In terms of assembly, homotrimer; disulfide-linked. Binds to heparan sulfate proteoglycans. Interacts with gH/gL heterodimer.

The protein localises to the virion membrane. The protein resides in the host cell membrane. It localises to the host endosome membrane. Its subcellular location is the host Golgi apparatus membrane. Functionally, envelope glycoprotein that forms spikes at the surface of virion envelope. Essential for the initial attachment to heparan sulfate moieties of the host cell surface proteoglycans. Involved in fusion of viral and cellular membranes leading to virus entry into the host cell. Following initial binding to its host receptors, membrane fusion is mediated by the fusion machinery composed at least of gB and the heterodimer gH/gL. May be involved in the fusion between the virion envelope and the outer nuclear membrane during virion egress. In Amazona oratrix (yellow-headed parrot), this protein is Envelope glycoprotein B.